Reading from the N-terminus, the 47-residue chain is Large ribosomal subunit protein bL34 (47 aa).

Belongs to the bacterial ribosomal protein bL34 family.

In Mycobacterium tuberculosis (strain ATCC 25177 / H37Ra), this protein is Large ribosomal subunit protein bL34.